The primary structure comprises 131 residues: Fluoride-specific ion channel FluC 2 (131 aa).

4 helical membrane-spanning segments follow: residues 5–25 (SAVF…NLWI), 35–55 (WLEN…FMIG), 59–79 (PLLS…MSTF), and 95–115 (LLYV…GVFV). Positions 71 and 74 each coordinate Na(+).

The protein belongs to the fluoride channel Fluc/FEX (TC 1.A.43) family.

The protein localises to the cell membrane. It carries out the reaction fluoride(in) = fluoride(out). Its activity is regulated as follows. Na(+) is not transported, but it plays an essential structural role and its presence is essential for fluoride channel function. In terms of biological role, fluoride-specific ion channel. Important for reducing fluoride concentration in the cell, thus reducing its toxicity. The sequence is that of Fluoride-specific ion channel FluC 2 from Bacillus subtilis (strain 168).